We begin with the raw amino-acid sequence, 435 residues long: MAMAGGGRGDYGAFMERFVLPPPPSQQLPLHGLTFAIKDIFDIAGRVTGFGNPDWARTHAPAAATSPVVLAALAAGATSLGTTIMDEMAYSINGENTHYGTPTNPCAPGRVPGGSSSGSAVAVAANLVDFSLGTDTGGSVRVPAAYCGIFGLRPSHGLVSAENVIPMAQMFDTVGWFSRDLSTLSRVTKVLLPLPDDIVKQPTQVTIPMDCFQILGSLDDRTYQIINASVAKRFDSQILDNRNLGDFISDNVPSIGKFITDFSESELPSVPALSVISHVMRGLQRSQFKANHAEWVNTVKPNLGPGLRERILEAIASGDNESLEDFQAIRAEFKSALAALLKDHGILAIPTVPGPPPKVGMEAAPLENFRARAFSLLSIAGLSGFCQVSIPLGMRNGLPVSVSLVARHGADHFLLNVVEELYQTLIDEATKTWSS.

Residues K38 and S115 each act as charge relay system in the active site. Residue S139 is the Acyl-ester intermediate of the active site.

It belongs to the amidase family.

Its subcellular location is the cytoplasm. It localises to the nucleus. It is found in the nucleoplasm. It catalyses the reaction a monocarboxylic acid amide + H2O = a monocarboxylate + NH4(+). Functionally, amidase involved in auxin biosynthesis. Converts indole-3-acetamide (IAM) to indole-3-acetate, and phenyl-2-acetamide (PAM) to phenyl-2-acetate. Substrate preference is PAM &gt; IAM. The sequence is that of Amidase 1 from Oryza sativa subsp. japonica (Rice).